The following is a 34-amino-acid chain: Brevinin-2Ec (34 aa).

A disulfide bridge connects residues cysteine 28 and cysteine 34.

This sequence belongs to the frog skin active peptide (FSAP) family. Brevinin subfamily. As to expression, expressed by the skin glands.

It localises to the secreted. Its function is as follows. Shows antibacterial activity against representative Gram-negative and Gram-positive bacterial species, and hemolytic activity. The protein is Brevinin-2Ec of Pelophylax lessonae (Pool frog).